Here is a 330-residue protein sequence, read N- to C-terminus: Glucokinase (330 aa).

ATP is bound at residue 14–19; sequence ADIGGT.

Belongs to the bacterial glucokinase family.

Its subcellular location is the cytoplasm. The catalysed reaction is D-glucose + ATP = D-glucose 6-phosphate + ADP + H(+). In Colwellia psychrerythraea (strain 34H / ATCC BAA-681) (Vibrio psychroerythus), this protein is Glucokinase.